The chain runs to 122 residues: MARIAGVNIPTNKRVVIALQYIHGIGPKLAREITSKVGIPDDRRVHQLTDAEVLAIREAIDRDYQVEGDLRREVSMNIKRLMDLGCYRGLRHRRSLPVRGQRTHTNARTRKGPAKPIAGKKK.

A disordered region spans residues 93–122 (RRSLPVRGQRTHTNARTRKGPAKPIAGKKK).

It belongs to the universal ribosomal protein uS13 family. In terms of assembly, part of the 30S ribosomal subunit. Forms a loose heterodimer with protein S19. Forms two bridges to the 50S subunit in the 70S ribosome.

In terms of biological role, located at the top of the head of the 30S subunit, it contacts several helices of the 16S rRNA. In the 70S ribosome it contacts the 23S rRNA (bridge B1a) and protein L5 of the 50S subunit (bridge B1b), connecting the 2 subunits; these bridges are implicated in subunit movement. Contacts the tRNAs in the A and P-sites. In Chelativorans sp. (strain BNC1), this protein is Small ribosomal subunit protein uS13.